We begin with the raw amino-acid sequence, 436 residues long: 3-ketoacyl-CoA thiolase (436 aa).

Cysteine 99 (acyl-thioester intermediate) is an active-site residue. Catalysis depends on proton acceptor residues histidine 392 and cysteine 422.

It belongs to the thiolase-like superfamily. Thiolase family. As to quaternary structure, heterotetramer of two alpha chains (FadJ) and two beta chains (FadI).

It is found in the cytoplasm. The enzyme catalyses an acyl-CoA + acetyl-CoA = a 3-oxoacyl-CoA + CoA. Its pathway is lipid metabolism; fatty acid beta-oxidation. In terms of biological role, catalyzes the final step of fatty acid oxidation in which acetyl-CoA is released and the CoA ester of a fatty acid two carbons shorter is formed. This Escherichia coli O7:K1 (strain IAI39 / ExPEC) protein is 3-ketoacyl-CoA thiolase.